The following is a 442-amino-acid chain: Cyclic adenylate deaminase (442 aa).

The protein belongs to the metallo-dependent hydrolases superfamily. Adenosine and AMP deaminases family. Requires Zn(2+) as cofactor.

It catalyses the reaction 3',5'-cyclic AMP + H2O + H(+) = 3',5'-cyclic IMP + NH4(+). Its function is as follows. Deaminates cAMP into cIMP, thereby repressing cAMP dependent metabolism or genes. This chain is Cyclic adenylate deaminase (add), found in Leptospira interrogans serogroup Icterohaemorrhagiae serovar copenhageni (strain Fiocruz L1-130).